Consider the following 142-residue polypeptide: Large ribosomal subunit protein uL16 (142 aa).

This sequence belongs to the universal ribosomal protein uL16 family. In terms of assembly, part of the 50S ribosomal subunit.

Its function is as follows. Binds 23S rRNA and is also seen to make contacts with the A and possibly P site tRNAs. The polypeptide is Large ribosomal subunit protein uL16 (Aquifex aeolicus (strain VF5)).